Here is a 158-residue protein sequence, read N- to C-terminus: Large ribosomal subunit protein uL22 (158 aa).

The protein belongs to the universal ribosomal protein uL22 family. In terms of assembly, part of the 50S ribosomal subunit.

This protein binds specifically to 23S rRNA. It makes multiple contacts with different domains of the 23S rRNA in the assembled 50S subunit and ribosome. In terms of biological role, the globular domain of the protein is located near the polypeptide exit tunnel on the outside of the subunit, while an extended beta-hairpin is found that lines the wall of the exit tunnel in the center of the 70S ribosome. The protein is Large ribosomal subunit protein uL22 of Haloquadratum walsbyi (strain DSM 16790 / HBSQ001).